The sequence spans 248 residues: MTIKNKVIIITGASSGIGEATAILLAEKGAKLVLAARRVEKLEKIVQTIKASSGEAIFAKTDVTKREDNKKLVELAIERYGKVDAIFLNAGIMPNSPLSALKEDEWEQMIDINIKGVLNGIAAVLPSFIAQKSGHIIATSSVAGLKAYPGGAVYGATKWAVRDLMEVLRMESAQEGTNIRTATIYPAAINTELLETITDKETEQGMTNLYKQYGVTPDRIASIVAYAIDQPEDINVNEFTVGPTTQPW.

Residue I9–V33 participates in NADP(+) binding. S141 provides a ligand contact to substrate. Y154 serves as the catalytic Proton acceptor.

This sequence belongs to the short-chain dehydrogenases/reductases (SDR) family.

This is an uncharacterized protein from Listeria innocua serovar 6a (strain ATCC BAA-680 / CLIP 11262).